Reading from the N-terminus, the 183-residue chain is UPF0397 protein VSAL_I1988 (183 aa).

The next 5 membrane-spanning stretches (helical) occupy residues 8-28, 41-61, 74-94, 110-130, and 147-167; these read VVVI…MFGI, AVLA…VGFI, VWLT…LFPI, FFIF…TSAF, and LCII…FILT.

It belongs to the UPF0397 family.

It localises to the cell membrane. The polypeptide is UPF0397 protein VSAL_I1988 (Aliivibrio salmonicida (strain LFI1238) (Vibrio salmonicida (strain LFI1238))).